Consider the following 430-residue polypeptide: Asparagine--tRNA ligase (430 aa).

The protein belongs to the class-II aminoacyl-tRNA synthetase family. As to quaternary structure, homodimer.

The protein resides in the cytoplasm. The enzyme catalyses tRNA(Asn) + L-asparagine + ATP = L-asparaginyl-tRNA(Asn) + AMP + diphosphate + H(+). The sequence is that of Asparagine--tRNA ligase from Shouchella clausii (strain KSM-K16) (Alkalihalobacillus clausii).